A 942-amino-acid polypeptide reads, in one-letter code: MVLMEDMQNKDGHNTVENSSGGTDSNNNIQMRRMRKTQLSKKELFEKRKSDVLIAAKSLDTEIQNVKNLKRLSIGSMDLVIDPELEFKVNSRNSYSSDSSKESLQESLHEENIIRSEQKEEQGSEDNDAYEEGDATNVDDSIDITQTEYLHDEETLEKEKIIRNASSSTSSSARVTSRNRRLSGVKTLAHDVVLDVENDHDSKMVDLTQNLLWVPADQHPNVKPENYLELIQDTLQNIQISTNQDIDENKLELGNNHVISNRKRTGSVVRRPSRLKTSYTKFDDEPPLADKPQEGEIQVDKRISSSDIKTIRSVSLKEITEELTKISNNAGLTDSDAVTLARSLSMSGSFTNESLHLNGNHTENDNEFASNMFNETGLTIPERSSLRRSKFNTYKIRLEGSSLPQAVKLNSLMNIQTNDNRRSASSPASYTQVPQEQASLNDFHEIFDHYRRTSTDWSTENEKYVDSTNYYSDEEDLTHASISQESSLLSTDSSNNSVLIKPHNTGSMISEKLDQHVSSSEKSNTNNSEANHGWSWLNSSNGSLNANEQTYQQLTDDEDDEECVDNEKADFVNLSVSRRAKSTKRASERINHSKNRHSPIFQIHSEEAKSVVITPSVVSSSESQPSKPTAPAVVEKKVELPTDTQASTHKKNSLEKRLAKLFKRKQHNGTCKSDVKVIKKSVKKELKKKASHSSLSKFRKSPKKKPQEAEVERPSSPTKTITTEDIDTASVIEPEVRSSNASTLLPDSHTSHSSEFVVETISELDGDDSFDISGGDVNYDVEVHSSISRDTTAGLEEDIGAEREDNTSPTAPQISTLPPRKLTFEDVVKPDYSNAPIKFTDSAFGFPLPMITNSTVIMFDHRLGINVERAIYRLSHLKLSDPGRELRQQVLLSNFMYSYLNLVNHTLYMEQVGTGDIAFNGDSALGMMDKNDSDGTILIPDI.

A disordered region spans residues 1–28 (MVLMEDMQNKDGHNTVENSSGGTDSNNN). A compositionally biased stretch (polar residues) spans 15-28 (TVENSSGGTDSNNN). Ser50 is modified (phosphoserine). Disordered stretches follow at residues 91–142 (SRNS…DDSI), 483–541 (SQES…NSSN), 617–654 (VVSS…KNSL), 682–728 (VKKE…DIDT), and 788–817 (SRDT…ISTL). Positions 99–122 (SSKESLQESLHEENIIRSEQKEEQ) are enriched in basic and acidic residues. Residues 123-134 (GSEDNDAYEEGD) are compositionally biased toward acidic residues. Composition is skewed to low complexity over residues 483-497 (SQES…SNNS), 518-541 (SSSE…NSSN), and 617-627 (VVSSSESQPSK). Over residues 682–704 (VKKELKKKASHSSLSKFRKSPKK) the composition is skewed to basic residues. A compositionally biased stretch (polar residues) spans 807–816 (TSPTAPQIST).

The protein to yeast ZDS1/NRC1/CES1. Interacts with SKG6.

Acts as a negative regulator of polarized growth via an alternative mechanism to ZDS1. In heat-stressed cells appears to play a role in localizing BCY1 to the cytoplasm. Seems to interact with, and down-regulate, CDC42. Also acts as a suppressor of PKC1. May act as an integration point for distinct signaling pathways helping to maintain a balance among these different pathways. This chain is Protein ZDS2 (ZDS2), found in Saccharomyces cerevisiae (strain ATCC 204508 / S288c) (Baker's yeast).